Consider the following 1385-residue polypeptide: Defecation cycle abnormal dec-7 (1385 aa).

The signal sequence occupies residues 1–19; the sequence is MWTARHAVALLVVLTYAYS. N-linked (GlcNAc...) asparagine glycosylation is present at Asn156. Positions 234-262 are disordered; sequence SQTNYGAPNYQQAGAQSAANQQFSNPSQY. A compositionally biased stretch (low complexity) spans 242–261; it reads NYQQAGAQSAANQQFSNPSQ. One can recognise an NIDO domain in the interval 285 to 450; that stretch reads QIYGKRKKRQ…GRWIHRVDEV (166 aa). N-linked (GlcNAc...) asparagine glycans are attached at residues Asn313, Asn386, Asn413, Asn458, Asn480, Asn562, and Asn583. Residues 681–840 form the AMOP domain; sequence GRNWPIDMCI…DHCEFYYWRR (160 aa). One can recognise a VWFD domain in the interval 852-1088; the sequence is AAGYIYGEPH…FWKIDGTNDK (237 aa). N-linked (GlcNAc...) asparagine glycosylation is found at Asn909, Asn921, Asn975, Asn1009, and Asn1124. One can recognise a Sushi domain in the interval 1179–1238; it reads ISCGPLLKKEGVVKTPPAANYLDGDKVVFSCKPKYYIHGDIERVCRNGTWSPGWWAWCRD. 2 disulfides stabilise this stretch: Cys1181-Cys1223 and Cys1209-Cys1236. The N-linked (GlcNAc...) asparagine glycan is linked to Asn1225. Residues 1251 to 1271 form a helical membrane-spanning segment; the sequence is LLSIFGISLIFVIFFCILWNI. A disordered region spans residues 1321–1385; sequence MNQPSRPIPS…GNMRFETSAI (65 aa).

As to expression, highly expressed in the intestinal epithelia.

Its subcellular location is the membrane. It localises to the cell junction. May negatively regulate activity of innexin gap junction protein inx-16, thereby mediating the rhythmic frequency of the defecation motor program. Required for the clustering of inx-16 to the cell-cell junction of the intestinal epithelia. Probably dispensable for intestinal integrity. May be a cytokine receptor. This chain is Defecation cycle abnormal dec-7, found in Caenorhabditis elegans.